Consider the following 314-residue polypeptide: Aspartate carbamoyltransferase catalytic subunit (314 aa).

Arg64 and Thr65 together coordinate carbamoyl phosphate. Lys92 serves as a coordination point for L-aspartate. Residues Arg114, His142, and Gln145 each coordinate carbamoyl phosphate. L-aspartate contacts are provided by Arg175 and Arg230. Positions 271 and 272 each coordinate carbamoyl phosphate.

Belongs to the aspartate/ornithine carbamoyltransferase superfamily. ATCase family. In terms of assembly, heterododecamer (2C3:3R2) of six catalytic PyrB chains organized as two trimers (C3), and six regulatory PyrI chains organized as three dimers (R2).

The enzyme catalyses carbamoyl phosphate + L-aspartate = N-carbamoyl-L-aspartate + phosphate + H(+). It participates in pyrimidine metabolism; UMP biosynthesis via de novo pathway; (S)-dihydroorotate from bicarbonate: step 2/3. Its function is as follows. Catalyzes the condensation of carbamoyl phosphate and aspartate to form carbamoyl aspartate and inorganic phosphate, the committed step in the de novo pyrimidine nucleotide biosynthesis pathway. The protein is Aspartate carbamoyltransferase catalytic subunit of Deinococcus radiodurans (strain ATCC 13939 / DSM 20539 / JCM 16871 / CCUG 27074 / LMG 4051 / NBRC 15346 / NCIMB 9279 / VKM B-1422 / R1).